A 1173-amino-acid chain; its full sequence is Eukaryotic translation initiation factor 3 subunit A (1173 aa).

Positions 319-502 (LQRMAAHVLL…NSIYFGTDLT (184 aa)) constitute a PCI domain. Disordered regions lie at residues 589–613 (QNNA…LAEQ) and 836–1173 (AAEA…PVQL). Composition is skewed to basic and acidic residues over residues 836–900 (AAEA…RGGD), 925–1011 (DRNE…EPDS), 1028–1081 (SRDD…DAAP), and 1090–1125 (DAPR…RAPK). The span at 1128 to 1142 (GPSGGTGTAAGGGGN) shows a compositional bias: gly residues. Residues 1149–1165 (PRDEPAPKRDQPQDKGK) are compositionally biased toward basic and acidic residues.

Belongs to the eIF-3 subunit A family. Component of the eukaryotic translation initiation factor 3 (eIF-3) complex. The eIF-3 complex interacts with pix.

Its subcellular location is the cytoplasm. In terms of biological role, RNA-binding component of the eukaryotic translation initiation factor 3 (eIF-3) complex, which is involved in protein synthesis of a specialized repertoire of mRNAs and, together with other initiation factors, stimulates binding of mRNA and methionyl-tRNAi to the 40S ribosome. The eIF-3 complex specifically targets and initiates translation of a subset of mRNAs involved in cell proliferation. This Drosophila persimilis (Fruit fly) protein is Eukaryotic translation initiation factor 3 subunit A.